Reading from the N-terminus, the 410-residue chain is Histidine--tRNA ligase (410 aa).

Belongs to the class-II aminoacyl-tRNA synthetase family.

Its subcellular location is the cytoplasm. It catalyses the reaction tRNA(His) + L-histidine + ATP = L-histidyl-tRNA(His) + AMP + diphosphate + H(+). In Methanoregula boonei (strain DSM 21154 / JCM 14090 / 6A8), this protein is Histidine--tRNA ligase.